Consider the following 682-residue polypeptide: Methionine--tRNA ligase (682 aa).

The 'HIGH' region motif lies at P15 to H25. Zn(2+) is bound by residues C146, C149, C159, and C162. The 'KMSKS' region signature appears at K331–S335. K334 lines the ATP pocket. The region spanning D580 to K682 is the tRNA-binding domain.

The protein belongs to the class-I aminoacyl-tRNA synthetase family. MetG type 1 subfamily. As to quaternary structure, homodimer. The cofactor is Zn(2+).

The protein localises to the cytoplasm. It catalyses the reaction tRNA(Met) + L-methionine + ATP = L-methionyl-tRNA(Met) + AMP + diphosphate. In terms of biological role, is required not only for elongation of protein synthesis but also for the initiation of all mRNA translation through initiator tRNA(fMet) aminoacylation. The protein is Methionine--tRNA ligase of Haemophilus influenzae (strain PittGG).